Here is a 312-residue protein sequence, read N- to C-terminus: Ribosomal protein L11 methyltransferase (312 aa).

Residues Thr-162, Gly-183, Asp-205, and Asn-248 each contribute to the S-adenosyl-L-methionine site.

Belongs to the methyltransferase superfamily. PrmA family.

The protein localises to the cytoplasm. It carries out the reaction L-lysyl-[protein] + 3 S-adenosyl-L-methionine = N(6),N(6),N(6)-trimethyl-L-lysyl-[protein] + 3 S-adenosyl-L-homocysteine + 3 H(+). Functionally, methylates ribosomal protein L11. The sequence is that of Ribosomal protein L11 methyltransferase from Bacillus anthracis (strain A0248).